A 337-amino-acid chain; its full sequence is Holliday junction branch migration complex subunit RuvB (337 aa).

The segment at 1-180 (MTRLISADKS…FGVISRLEFY (180 aa)) is large ATPase domain (RuvB-L). Residues Leu-19, Arg-20, Gly-61, Lys-64, Thr-65, Thr-66, 127-129 (EDF), Arg-170, Tyr-180, and Arg-217 contribute to the ATP site. Residue Thr-65 coordinates Mg(2+). A small ATPAse domain (RuvB-S) region spans residues 181–251 (THDELAFIIT…VADQALALLE (71 aa)). The interval 254 to 337 (EMGFDMMDRA…APEPPQGKLF (84 aa)) is head domain (RuvB-H). Positions 309 and 314 each coordinate DNA.

It belongs to the RuvB family. In terms of assembly, homohexamer. Forms an RuvA(8)-RuvB(12)-Holliday junction (HJ) complex. HJ DNA is sandwiched between 2 RuvA tetramers; dsDNA enters through RuvA and exits via RuvB. An RuvB hexamer assembles on each DNA strand where it exits the tetramer. Each RuvB hexamer is contacted by two RuvA subunits (via domain III) on 2 adjacent RuvB subunits; this complex drives branch migration. In the full resolvosome a probable DNA-RuvA(4)-RuvB(12)-RuvC(2) complex forms which resolves the HJ.

The protein localises to the cytoplasm. The catalysed reaction is ATP + H2O = ADP + phosphate + H(+). The RuvA-RuvB-RuvC complex processes Holliday junction (HJ) DNA during genetic recombination and DNA repair, while the RuvA-RuvB complex plays an important role in the rescue of blocked DNA replication forks via replication fork reversal (RFR). RuvA specifically binds to HJ cruciform DNA, conferring on it an open structure. The RuvB hexamer acts as an ATP-dependent pump, pulling dsDNA into and through the RuvAB complex. RuvB forms 2 homohexamers on either side of HJ DNA bound by 1 or 2 RuvA tetramers; 4 subunits per hexamer contact DNA at a time. Coordinated motions by a converter formed by DNA-disengaged RuvB subunits stimulates ATP hydrolysis and nucleotide exchange. Immobilization of the converter enables RuvB to convert the ATP-contained energy into a lever motion, pulling 2 nucleotides of DNA out of the RuvA tetramer per ATP hydrolyzed, thus driving DNA branch migration. The RuvB motors rotate together with the DNA substrate, which together with the progressing nucleotide cycle form the mechanistic basis for DNA recombination by continuous HJ branch migration. Branch migration allows RuvC to scan DNA until it finds its consensus sequence, where it cleaves and resolves cruciform DNA. This Geobacter sp. (strain M21) protein is Holliday junction branch migration complex subunit RuvB.